Reading from the N-terminus, the 238-residue chain is uncharacterized protein (238 aa).

This sequence belongs to the mimivirus L74/L77/R857 family.

This is an uncharacterized protein from Acanthamoeba polyphaga mimivirus (APMV).